Reading from the N-terminus, the 724-residue chain is MADEDLIFRLEGVDGGGSSGAGRHGDSDTDSDDDEGYFICPITDDHMSNQNVNSKGQGYYNNLLKTECGSTGSPASSFHFKEAWKHAIEKAKHMPDPWAEFHLEDIATEHATRHRYNAVTGEWLKDEVLIKMASQPFGRGAMRECFRTKKLSNFLHAQHWKGASNYVAKRYLEPVDRSVYFEDVQLQMEAKLWGEEYNRHKPPKQVDIMQMCIIELKDRQGQPLFHLEHYIEGKYIKYNSNSGFVRDDNIRLTPQAFSHFTFERSGHQLIVVDIQGVGDLYTDPQIHTEKGTDFGDGNLGVRGMALFFYSHACNRICQSMGLAPFDLSPREQDAVNQSTKLLQSAKTILRGTEEKCGSPRIRTLSGSRPPLLLRLSENSGDENMSDVTFDSLPSSPSSATPHSQKLDHLHWPVFGDLDNMGPRDHDRMDNHRDSENSGDSGYPSEKRSDLDDPEPREHGHSNGNRRPESDEDSLGSSGRVCVETWNLLNPSRLHLPRPSAVALEVQRLNALDLGRKIGKSVLGKVHLAMVRYHEGGRFCEKDEEWDQESAIFHLEHAADLGELEAIVGLGLMYSQLPHHILADVSLEETEENKTKGFDYLLKAAEAGDRQSMILVARAFDTGLNLSPDRCQDWSEALHWYNTALETTDCDEGGEYDGIQDEPQYALLAREAEMLLTGGFGLDKNPQRSGDLYTQAAEAAMEAMKGRLANQYYEKAEEAWAQMEE.

Ala2 bears the N-acetylalanine mark. The tract at residues 11–35 (EGVDGGGSSGAGRHGDSDTDSDDDE) is disordered. Residues 13-22 (VDGGGSSGAG) are compositionally biased toward gly residues. Ser18, Ser27, Ser70, and Ser73 each carry phosphoserine. At Ser77 the chain carries Phosphoserine; by autocatalysis and TRPM7. The segment at 80-93 (FKEAWKHAIEKAKH) is calmodulin-binding. One can recognise an Alpha-type protein kinase domain in the interval 115–325 (RYNAVTGEWL…ICQSMGLAPF (211 aa)). Ser242 carries the post-translational modification Phosphoserine. 295-301 (GDGNLGV) is a binding site for ATP. Position 347 is a phosphothreonine (Thr347). Thr352 carries the phosphothreonine; by autocatalysis modification. Positions 353 to 476 (EEKCGSPRIR…PESDEDSLGS (124 aa)) are disordered. Ser358 is subject to Phosphoserine; by MAPK13 and CDK1. A compositionally biased stretch (low complexity) spans 364–376 (LSGSRPPLLLRLS). Residues Ser365 and Ser391 each carry the phosphoserine modification. Positions 385-403 (SDVTFDSLPSSPSSATPHS) are enriched in polar residues. Ser397 bears the Phosphoserine; by AMPK mark. Basic and acidic residues-rich tracts occupy residues 421–435 (GPRDHDRMDNHRDSE) and 444–468 (SEKRSDLDDPEPREHGHSNGNRRPE). Phosphoserine occurs at positions 434, 444, 469, 473, and 476. Ser499 carries the post-translational modification Phosphoserine; by PKA.

Belongs to the protein kinase superfamily. Alpha-type protein kinase family. As to quaternary structure, monomer or homodimer. Interacts with Calmodulin/CALM1; this interaction is strictly required for phosphorylation activity. The N-terminus is blocked. In terms of processing, autophosphorylated at multiple residues, Thr-347 being the major site. Phosphorylated by AMP-activated protein kinase AMPK at Ser-397 leading to EEF2K activation and protein synthesis inhibition. Phosphorylated by TRPM7 at Ser-77 resulting in improved protein stability, higher EE2F phosphorylated and subsequently reduced rate of protein synthesis. Phosphorylation by other kinases such as CDK1 and MAPK13 at Ser-358 or RPS6KA1 and RPS6KB1 at Ser-365 instead decrease EEF2K activity and promote protein synthesis. Widely expressed, with high levels in reticulocytes and skeletal muscle.

It catalyses the reaction [translation elongation factor 2] + ATP = [translation elongation factor 2]-phosphate + ADP + H(+). Its activity is regulated as follows. Undergoes calcium/calmodulin-dependent intramolecular autophosphorylation, and this results in it becoming partially calcium/calmodulin-independent. Its function is as follows. Threonine kinase that regulates protein synthesis by controlling the rate of peptide chain elongation. Upon activation by a variety of upstream kinases including AMPK or TRPM7, phosphorylates the elongation factor EEF2 at a single site, renders it unable to bind ribosomes and thus inactive. In turn, the rate of protein synthesis is reduced. The polypeptide is Eukaryotic elongation factor 2 kinase (Rattus norvegicus (Rat)).